The primary structure comprises 395 residues: MSVEEQIVTPWDVKGSIVDGEEKGIDYERLIVQFGTRKITPEQLERFEKLTGKKPHLLLRRGAFFSHRDFDMILDRYEQKKPFYLYTGRGPSSDSMHLGHMIPFMFCKWLQDVFQVPLVIQLTDDEKFLFKQGVSLEDCQRFARENAKDIIAVGFDPKKTFIFMNSTYVGGAFYQNVVRIAKCITANQSKACFGFTDSDSIGKIHFASIQAAPSFSSSFPHIFNGAKDIPCLIPCAIDQDPYFRLTRDVSGRLKFKKPALLHSRFFPALQGPQSKMSASKDSSAIFMTDTPNKIKNKINRHAFSGGGATIEIHREKGGNPDVDVAYQYLSFFLDDDEKLKQLYNTYKAGTLSTGEMKGECIKLLQQFVSDFQAARSKVDEATLDMFMDGSRKLEW.

A 'HIGH' region motif is present at residues 91-100; sequence PSSDSMHLGH. A 'KMSKS' region motif is present at residues 275 to 279; the sequence is KMSAS. Residues threonine 288 and threonine 290 each carry the phosphothreonine modification.

Belongs to the class-I aminoacyl-tRNA synthetase family.

It is found in the cytoplasm. It carries out the reaction tRNA(Trp) + L-tryptophan + ATP = L-tryptophyl-tRNA(Trp) + AMP + diphosphate + H(+). This chain is Tryptophan--tRNA ligase, cytoplasmic (wrs1), found in Schizosaccharomyces pombe (strain 972 / ATCC 24843) (Fission yeast).